The sequence spans 2624 residues: MFRRARLSVKPNVRPGVGARGSTASNPQRGRESPRPPDPATDSASKPAEPTDVPTVDFGGAEPQEKAPRSSTEKTGGDNDVEESSRSSSTVSQRRKRISSTSSLVKSSVSVPSESHPLSTINQEAPQPTATSTKEKQPCSDRYRIYKAQKLREMLKEELRKEKKQWKNKYAINESQRPPDRSKMTMRDFIYYLPDNNPMTSSLEQEKKTEKPSTPVQTREQEGKSTPNAEDNEMEEETDDGPLLVPRVKVAEDGSIILDEESLTVEVLRTKGPCVVEENDPIFERGSTTTYSSFRKNYYSKPWSNKETDMFFLAISMVGTDFSMIGQLFPHRARIEIKNKFKREEKTNGWRIDKAFQEKRPFDFDFFAHLLQKVLAEEEKRKQKSVKNHSLKEKKSTKPRKNVKVKKVACEGVNNDPDESMSSRISDTERSQKDAQTVEEESLTLSREDAEQVALEVDLNQKKRRRKKQDGANELGVNNLLENATVQAGPSKGEKHKNKCQAIRPELKEGECSKEQMLSCTQNIDGIVGFASTEKVEKRTDPILSLSNQQDATSVATESSESSTSDLPSFEVGIRALCEVNNAEGSCIEERNVDLKNNSLEIDQTENVKPMLRGRFQRPKPNLSRAGKKSVLSQGKTESESKNSHSKTSVEKNHVEKDKMNTLDILRMETTERENPEAETVSVLGEKNCLQEGSQLKALRPVQVRGRLQKPKPNAGKAAERKEILISQEEIGANVEKNENESCADRDTPQHMEDQSRKDFEEEDVILQPEKNDSFQNVQPDEPKVLNECLSVQENNKANKLNQVPILRTRFQKPKPNIGRGTGRREISSKEEVLEKILVSGEMAAALRETVRLDTSPKEMVPAEINTKEMQSDLKETGRRAISPREKILDVIDDTIEMETGLKAMGREICLREKTPEVIDATEEIDKDLEEAGRREISPQKNGPEEVKPLGEVETDLKATGNESSPREKTPEVTDATEEIDKNLEETGRRKISPRENGPEEVKPVDEMETDLNATGRESSPREKTPEVIDATEEIDLEETEREVSPQENGLEEVKPLGEMETDLKATGRDSFPRGKTPEVIDAIEEIEIDLEETEREISPQENGLEEVKPLGEMQTDLKATGREISPREKTPEVIDATEEIDKDLEETGRREISPEENGPEEVKPVDEMETDLKTTGREGSSREKTREVIDAAEVIETDLEETEREISPQENGPEEVKPVGKMETDLKEIREEISQREKVLAEFSAIREKEIDLKETGKRDIPIMEKVSGKMAVVEEMEADLKETGKENFRERGSEEICVTEEKVAELKQTGKTDISPRENELEETSTSRQTDTHLMQSGSNDFSAVPSLDIQNISSEVLSMMHTPVEEKRNSEKEVSSHFSHFKISSQTHESDKTEVQGIQSPDVPEQFSDINLSKSLPQEQKPLEIKPAPFVRSRFKRPKPNLARAALKRETTESEKYIYEKKSETKKMETIVMQENNEQTDTLPSQHDEASLMISREKDTLGHRNEEAVILPCTQTERNLSPSNSCEPKEESQSAPVQKNDSVVSVGTNNVNTFQQEMKESVIQTARQVRGRLQRPRPNIRKTGQRQIVDKGEAKGIIKEGRTILPKDETEKKVLTVSNSQIETEIEVPSSAVPEHRMYENQSQVVLVENLHVNKTNETIRHENKPYVPSSAQMTRRKFQKAKPNLGRAHSKKEEPVLEKVTTDQSKEGKPEDHLLQKGASNTQLLLKEKAELLTSLEVSARKDCVGSKESALAKIDAELEEVGPSRRVGEETVGDNSPSSVVEEQYLNKLTSCPQPLNETSYSKIALDGKTTISSTSEYERNRGERRSHKKFKPNVTRGRGSKRVRGKTSKKEPRASKAMLVTLRASQEEDDDADDFESDYEEESYHLAPEEVNKAPVFVPVGLRSPEPVSAQIEETMEELEITVNVPDVGCIAVVEHELPNTDVTTEEMKQEENLSVPFEMTTSEHIQDEPGTNDGSTEAAITLLTMGDLVLQSEISSEQGDVGVCIIPHVHSKDKSHIPSSLDNVNHKIVHECQELSSPVITTSPASFEENKIVLEEQSSREEISLMEKVKENATPTRNTISKVTSNLRIRSRLAKPKPNLEKTLGTNRLDDYQEVSSLCVTKGAEMETQRETEKNASKATELENKNLGPVTTAENKDQSKLACVHGIKGTSISSEVNLTERNENQEESSQEVHMLSVAPVASSETGPCTLGLDRGLGENSVEEPQIKDSKGDSVLTLPVPEYTPTSIPEVQQENIINPQDLTVNLVANVPQDGEDEQAFILTLVEIPANAVEEFTDATAQFMPNPLLPAPILVKSVNTEERGDMSICLPATSVGQDAMGLSISGRDNSKKPPDNLDLVSRKRFQCRLDKNDHIPPAKKRSLTLRDDCQEYTTEVHSKELTNVFEETGESHKGQDIFLTSGSTLTTPEPQRQQVEAAFQSRGSRSPDACMDKNVPQLPQDEMIVSDKEERTDAAPKSQQMDSRTSSSKASLSRPGRRPLGFLSLICSKNSLESDEPMQVHSKKRLKPLIPGLRKKLKRSNPFNESQEKNRESSDLLPSPSVITTQSENISSSATQVSCDQPLLKEGYKSAQKRAPQGEATTVSEYFFNDIFIEVDETE.

The tract at residues 1-142 (MFRRARLSVK…TKEKQPCSDR (142 aa)) is disordered. Residues 1–299 (MFRRARLSVK…TYSSFRKNYY (299 aa)) are interaction with ZBTB43. Positions 63-77 (PQEKAPRSSTEKTGG) are enriched in basic and acidic residues. A compositionally biased stretch (low complexity) spans 99 to 119 (SSTSSLVKSSVSVPSESHPLS). Polar residues predominate over residues 120–132 (TINQEAPQPTATS). Residues 133–142 (TKEKQPCSDR) show a composition bias toward basic and acidic residues. Residues 144 to 177 (RIYKAQKLREMLKEELRKEKKQWKNKYAINESQR) are a coiled coil. Residues 193-241 (LPDNNPMTSSLEQEKKTEKPSTPVQTREQEGKSTPNAEDNEMEEETDDG) are disordered. The segment covering 212–229 (PSTPVQTREQEGKSTPNA) has biased composition (polar residues). Over residues 230–240 (EDNEMEEETDD) the composition is skewed to acidic residues. The Myb-like domain occupies 295 to 345 (RKNYYSKPWSNKETDMFFLAISMVGTDFSMIGQLFPHRARIEIKNKFKREE). The interval 355–470 (AFQEKRPFDF…QKKRRRKKQD (116 aa)) is required for phosphorylation by CSNK2A1. Disordered regions lie at residues 379–449 (EKRK…SRED), 544–567 (LSLS…TSDL), 606–663 (ENVK…MNTL), and 729–759 (EEIG…SRKD). The segment covering 397 to 407 (TKPRKNVKVKK) has biased composition (basic residues). The segment covering 552-565 (ATSVATESSESSTS) has biased composition (low complexity). 2 stretches are compositionally biased toward basic and acidic residues: residues 637–663 (TESE…MNTL) and 736–759 (EKNE…SRKD). The 1; approximate repeat unit spans residues 823–877 (GRREISSKEEVLEKILVSGEMAAALRETVRLDTSPKEMVPAEINTKEMQSDLKET). A 9 X 55 AA repeats of G-R-R-X-I-S-P-X-E-N-G-X-E-E-V-K-P-X-X-E-M-E-T-D-L-K-X-T-G-R-E-X-X-X-R-E-K-T-X-E-X-X-D-A-X-E-E-I-D-X-D-L-E-E-T region spans residues 823–1327 (GRREISSKEE…PRENELEETS (505 aa)). 6 tandem repeats follow at residues 878–932 (GRRA…LEEA), 933–987 (GRRE…LEET), 988–1040 (GRRK…LEET), 1041–1094 (EREV…LEET), 1095–1148 (EREI…LEET), and 1149–1203 (GRRE…LEET). Threonine 915 bears the Phosphothreonine mark. 2 stretches are compositionally biased toward basic and acidic residues: residues 930-957 (EEAG…ETDL) and 979-1006 (EIDK…KPVD). The interval 930 to 1222 (EEAGRREISP…GPEEVKPVGK (293 aa)) is disordered. The segment covering 1030-1041 (DATEEIDLEETE) has biased composition (acidic residues). Residues 1052–1079 (EEVKPLGEMETDLKATGRDSFPRGKTPE) are compositionally biased toward basic and acidic residues. A coiled-coil region spans residues 1078–1103 (PEVIDAIEEIEIDLEETEREISPQEN). Positions 1082–1095 (DAIEEIEIDLEETE) are enriched in acidic residues. A compositionally biased stretch (basic and acidic residues) spans 1120 to 1133 (ATGREISPREKTPE). The span at 1136 to 1145 (DATEEIDKDL) shows a compositional bias: acidic residues. The segment covering 1161–1190 (EEVKPVDEMETDLKTTGREGSSREKTREVI) has biased composition (basic and acidic residues). Acidic residues predominate over residues 1194-1204 (EVIETDLEETE). One copy of the 8; approximate repeat lies at 1204-1257 (EREISPQENGPEEVKPVGKMETDLKEIREEISQREKVLAEFSAIREKEIDLKET). Residues 1223 to 1284 (METDLKEIRE…VEEMEADLKE (62 aa)) are a coiled coil. A 9; approximate repeat occupies 1258–1327 (GKRDIPIMEK…PRENELEETS (70 aa)). Basic and acidic residues predominate over residues 1306 to 1321 (AELKQTGKTDISPREN). Disordered regions lie at residues 1306–1348 (AELK…SAVP), 1365–1440 (TPVE…RFKR), 1519–1543 (TERN…VQKN), 1684–1722 (KAKP…LQKG), 1819–1863 (STSE…ASKA), 2130–2164 (GAEM…ENKD), 2181–2200 (SEVN…QEVH), 2207–2241 (VASS…GDSV), 2444–2501 (FQSR…SRPG), and 2519–2566 (SDEP…PSPS). The segment covering 1326–1344 (TSTSRQTDTHLMQSGSNDF) has biased composition (polar residues). The span at 1366-1378 (PVEEKRNSEKEVS) shows a compositional bias: basic and acidic residues. Composition is skewed to polar residues over residues 1379-1390 (SHFSHFKISSQT), 1411-1421 (SDINLSKSLPQ), and 1519-1529 (TERNLSPSNSC). Basic and acidic residues predominate over residues 1695–1719 (KKEEPVLEKVTTDQSKEGKPEDHLL). Positions 1844-1853 (RGSKRVRGKT) are enriched in basic residues. Residues 2131–2151 (AEMETQRETEKNASKATELEN) are compositionally biased toward basic and acidic residues. Positions 2470–2479 (VSDKEERTDA) are enriched in basic and acidic residues. Positions 2488–2498 (SRTSSSKASLS) are enriched in low complexity. Basic residues predominate over residues 2526–2544 (HSKKRLKPLIPGLRKKLKR).

As to quaternary structure, component of TFIIIB complex. The TFIIIB complex has two activities, alpha and beta. The TFIIIB-alpha and TFIIIB-beta activities are required for transcription of genes with TFIIIC-bound internal promoters and PSE transcription factor-bound external promoters, respectively. The TFIIIB-alpha activity complex is composed of TBP, BDP1, and a complex containing both BRF2 and at least four stably associated proteins; YY1 facilitates the formation of TFIIIB-alpha activity complex. The TFIIIB-beta activity complex is composed of TBP, BDP1, and BRF1. Interacts with BRF1; this interaction diminishes during mitosis resulting in the release of BDP1 from chromosomal templates. Component of TFIIIC complex. The TFIIIC complex has two activities, C1 and C2. The TFIIIC2 activity complex is only required for transcription of the 'classical' pol III genes whereas the TFIIIC1 activity complex is required for transcription of all pol III genes. The TFIIIC1 activity complex is composed at least of BDP1. Interacts with ZBTB43. Post-translationally, phosphorylated by CSNK2A1 during mitosis, resulting in its release from chromatin and suppression of polymerase III transcription. In terms of tissue distribution, isoform 2 is highly expressed in cerebellum.

The protein localises to the nucleus. Functionally, general activator of RNA polymerase III transcription. Requires for transcription from all three types of polymerase III promoters. Requires for transcription of genes with internal promoter elements and with promoter elements upstream of the initiation site. In Homo sapiens (Human), this protein is Transcription factor TFIIIB component B'' homolog (BDP1).